A 209-amino-acid polypeptide reads, in one-letter code: 7-carboxy-7-deazaguanine synthase (209 aa).

Substrate contacts are provided by residues 10 to 12 (IQG) and Arg-25. Residues 16–205 (YAGLPMLFVR…PQIHKIIYGD (190 aa)) enclose the Radical SAM core domain. Residues Cys-29, Cys-33, and Cys-36 each contribute to the [4Fe-4S] cluster site. Thr-38 provides a ligand contact to Mg(2+). Thr-68 serves as a coordination point for substrate. Gly-70 serves as a coordination point for S-adenosyl-L-methionine.

This sequence belongs to the radical SAM superfamily. 7-carboxy-7-deazaguanine synthase family. Homodimer. It depends on [4Fe-4S] cluster as a cofactor. S-adenosyl-L-methionine serves as cofactor. The cofactor is Mg(2+).

It catalyses the reaction 6-carboxy-5,6,7,8-tetrahydropterin + H(+) = 7-carboxy-7-deazaguanine + NH4(+). It participates in purine metabolism; 7-cyano-7-deazaguanine biosynthesis. Its function is as follows. Catalyzes the complex heterocyclic radical-mediated conversion of 6-carboxy-5,6,7,8-tetrahydropterin (CPH4) to 7-carboxy-7-deazaguanine (CDG), a step common to the biosynthetic pathways of all 7-deazapurine-containing compounds. The protein is 7-carboxy-7-deazaguanine synthase of Thermoplasma acidophilum (strain ATCC 25905 / DSM 1728 / JCM 9062 / NBRC 15155 / AMRC-C165).